Consider the following 605-residue polypeptide: Glucose oxidase (605 aa).

The first 16 residues, 1–16 (MKTILSSSLVVSMAAA), serve as a signal peptide directing secretion. Residues L51 and T52 each contribute to the FAD site. Residue N65 is glycosylated (N-linked (GlcNAc...) asparagine). FAD is bound at residue E72. N111 is a glycosylation site (N-linked (GlcNAc...) asparagine). Positions 125, 129, 130, and 132 each coordinate FAD. C186 and C228 are disulfide-bonded. N-linked (GlcNAc...) asparagine glycosylation occurs at N190. FAD is bound at residue V272. N-linked (GlcNAc...) asparagine glycans are attached at residues N280, N377, N410, and N495. Residue H538 is the Proton acceptor of the active site. 2 residues coordinate O2: R559 and V560. The FAD site is built by G571 and M583.

This sequence belongs to the GMC oxidoreductase family. As to quaternary structure, homodimer. Requires FAD as cofactor.

It is found in the secreted. The protein localises to the cell wall. Its subcellular location is the cytoplasm. It localises to the extracellular space. The protein resides in the extracellular matrix. The enzyme catalyses beta-D-glucose + O2 = D-glucono-1,5-lactone + H2O2. Glucose oxidase catalyzes the oxidation of beta-D-glucose to D-glucono-delta-lactone and hydrogen peroxide in the presence of molecular oxygen. Acts as a critical factor modulating pathogenicity by controlling transcription of genes important for fungal secondary metabolism and infection such as those coding for enzymes involved in degradation of the host cell wall. The chain is Glucose oxidase from Aspergillus carbonarius (strain ITEM 5010).